The following is a 649-amino-acid chain: Serine/threonine kinase-like domain-containing protein STKLD1 (649 aa).

Over residues 1-13 the composition is skewed to basic and acidic residues; the sequence is MLGPESDGRRPTQ. A disordered region spans residues 1–23; that stretch reads MLGPESDGRRPTQGERGPGYPGE. Residues 28–379 enclose the Protein kinase domain; it reads YQVLYQLNPG…CNQAITSAVL (352 aa). Residues 34–42 and K57 each bind ATP; that span reads LNPGALGVN. The tract at residues 621–640 is disordered; it reads FSKPGLPPGGSPQPGCTASG.

The protein belongs to the protein kinase superfamily. Ser/Thr protein kinase family. STKL subfamily.

The protein is Serine/threonine kinase-like domain-containing protein STKLD1 (STKLD1) of Macaca fascicularis (Crab-eating macaque).